Reading from the N-terminus, the 288-residue chain is Bifunctional protein FolD (288 aa).

Residues 166–168 (GAS) and Ile-232 each bind NADP(+).

This sequence belongs to the tetrahydrofolate dehydrogenase/cyclohydrolase family. Homodimer.

The catalysed reaction is (6R)-5,10-methylene-5,6,7,8-tetrahydrofolate + NADP(+) = (6R)-5,10-methenyltetrahydrofolate + NADPH. It carries out the reaction (6R)-5,10-methenyltetrahydrofolate + H2O = (6R)-10-formyltetrahydrofolate + H(+). It functions in the pathway one-carbon metabolism; tetrahydrofolate interconversion. Catalyzes the oxidation of 5,10-methylenetetrahydrofolate to 5,10-methenyltetrahydrofolate and then the hydrolysis of 5,10-methenyltetrahydrofolate to 10-formyltetrahydrofolate. This is Bifunctional protein FolD from Cronobacter sakazakii (strain ATCC BAA-894) (Enterobacter sakazakii).